Reading from the N-terminus, the 1876-residue chain is Phenolphthiocerol/phthiocerol polyketide synthase subunit A (1876 aa).

Residues 9 to 83 enclose the Carrier 1 domain; sequence ADLRHWLIDY…ALAAYLAAPE (75 aa). Residue Ser43 is modified to O-(pantetheine 4'-phosphoryl)serine. The 426-residue stretch at 101 to 526 folds into the Ketosynthase family 3 (KS3) domain; it reads DEPIAVVGMG…GTNAHVVIEQ (426 aa). Active-site for beta-ketoacyl synthase activity residues include Cys273, His408, and His448. The segment at 624-950 is acyltransferase; that stretch reads EGSPGPGTVF…NLNKAHTIHP (327 aa). Ser720 acts as the For malonyltransferase activity in catalysis. The interval 997–1112 is N-terminal hotdog fold; it reads HTTVATVSAS…AQLSSSPSDS (116 aa). A PKS/mFAS DH domain is found at 997-1267; that stretch reads HTTVATVSAS…YRALDFGLDV (271 aa). His1027 (proton acceptor; for dehydratase activity) is an active-site residue. The segment at 1104–1130 is disordered; the sequence is QLSSSPSDSASSLNEHHRANGQPPERA. Residues 1106–1115 are compositionally biased toward low complexity; sequence SSSPSDSASS. The segment at 1130–1267 is C-terminal hotdog fold; it reads AHRDLIPDLA…YRALDFGLDV (138 aa). Catalysis depends on Asp1186, which acts as the Proton donor; for dehydratase activity. A beta-ketoacyl reductase region spans residues 1491–1728; the sequence is AAYLITGGLG…DGYDVAQAVV (238 aa). Residue 1492–1551 participates in NADP(+) binding; it reads AYLITGGLGALGLLMADWLADRGAHRLVLTGRTPLPPRRDWQLDTLDTELRRRIDAIRAL. A Carrier 2 domain is found at 1759 to 1836; it reads EVRSELEQGL…SLASYLAKRV (78 aa). The residue at position 1796 (Ser1796) is an O-(pantetheine 4'-phosphoryl)serine.

The cofactor is NADP(+). Requires pantetheine 4'-phosphate as cofactor.

It catalyses the reaction icosanoyl-[(phenol)carboxyphthiodiolenone synthase] + 2 (S)-methylmalonyl-CoA + 3 malonyl-CoA + 5 NADPH + 10 H(+) = C32-carboxyphthiodiolenone-[(phenol)carboxyphthiodiolenone synthase] + 5 CO2 + 5 NADP(+) + 5 CoA + 2 H2O. It carries out the reaction docosanoyl-[(phenol)carboxyphthiodiolenone synthase] + 2 (S)-methylmalonyl-CoA + 3 malonyl-CoA + 5 NADPH + 10 H(+) = C34-carboxyphthiodiolenone-[(phenol)carboxyphthiodiolenone synthase] + 5 CO2 + 5 NADP(+) + 5 CoA + 2 H2O. The enzyme catalyses 17-(4-hydroxyphenyl)heptadecanoyl-[(phenol)carboxyphthiodiolenone synthase] + 2 (S)-methylmalonyl-CoA + 3 malonyl-CoA + 5 NADPH + 10 H(+) = C35-(phenol)carboxyphthiodiolenone-[(phenol)carboxyphthiodiolenone synthase] + 5 CO2 + 5 NADP(+) + 5 CoA + 2 H2O. The catalysed reaction is 19-(4-hydroxyphenyl)nonadecanoyl-[(phenol)carboxyphthiodiolenone synthase] + 2 (S)-methylmalonyl-CoA + 3 malonyl-CoA + 5 NADPH + 10 H(+) = C37-(phenol)carboxyphthiodiolenone-[(phenol)carboxyphthiodiolenone synthase] + 5 CO2 + 5 NADP(+) + 5 CoA + 2 H2O. The protein operates within lipid metabolism; fatty acid biosynthesis. Its function is as follows. Part of the PpsABCDE complex involved in the biosynthesis of the lipid core common to phthiocerols and phenolphthiocerols by successive additions of malonyl-CoA or methylmalonyl-CoA extender units. PpsA can accept as substrate the activated forms of either icosanoyl (C20), docosanoyl (C22) or lignoceroyl (C24) groups from FadD26, or a (4-hydroxyphenyl)-C17 or (4-hydroxyphenyl)-C19 fatty acyl from FadD29. PpsA initiates the biosynthesis and extends its substrate using a malonyl-CoA extender unit. The PpsB and PpsC proteins add the second and third malonyl-CoA extender units. PpsD adds an (R)-methylmalonyl unit and PpsE adds a second (R)-methylmalonyl unit. The incorporation of the methylmalonyl units results in formation of two branched methyl groups in the elongated product. In Mycobacterium bovis (strain ATCC BAA-935 / AF2122/97), this protein is Phenolphthiocerol/phthiocerol polyketide synthase subunit A (ppsA).